The chain runs to 60 residues: UPF0434 protein ESA_02427 (60 aa).

It belongs to the UPF0434 family.

This Cronobacter sakazakii (strain ATCC BAA-894) (Enterobacter sakazakii) protein is UPF0434 protein ESA_02427.